Reading from the N-terminus, the 679-residue chain is Glycine--tRNA ligase beta subunit (679 aa).

The protein belongs to the class-II aminoacyl-tRNA synthetase family. Tetramer of two alpha and two beta subunits.

It localises to the cytoplasm. It catalyses the reaction tRNA(Gly) + glycine + ATP = glycyl-tRNA(Gly) + AMP + diphosphate. The sequence is that of Glycine--tRNA ligase beta subunit from Streptococcus pyogenes serotype M4 (strain MGAS10750).